Consider the following 428-residue polypeptide: Ribosomal RNA small subunit methyltransferase B (428 aa).

Residues 253–259 (CAAPGGK), D276, D302, and D321 contribute to the S-adenosyl-L-methionine site. The active-site Nucleophile is C374.

It belongs to the class I-like SAM-binding methyltransferase superfamily. RsmB/NOP family.

The protein localises to the cytoplasm. The catalysed reaction is cytidine(967) in 16S rRNA + S-adenosyl-L-methionine = 5-methylcytidine(967) in 16S rRNA + S-adenosyl-L-homocysteine + H(+). Specifically methylates the cytosine at position 967 (m5C967) of 16S rRNA. The protein is Ribosomal RNA small subunit methyltransferase B of Enterobacter sp. (strain 638).